The sequence spans 101 residues: Small ribosomal subunit protein uS14 (101 aa).

It belongs to the universal ribosomal protein uS14 family. In terms of assembly, part of the 30S ribosomal subunit. Contacts proteins S3 and S10.

Binds 16S rRNA, required for the assembly of 30S particles and may also be responsible for determining the conformation of the 16S rRNA at the A site. In Hahella chejuensis (strain KCTC 2396), this protein is Small ribosomal subunit protein uS14.